The following is a 156-amino-acid chain: Small ribosomal subunit protein uS7 (156 aa).

The protein belongs to the universal ribosomal protein uS7 family. As to quaternary structure, part of the 30S ribosomal subunit. Contacts proteins S9 and S11.

Functionally, one of the primary rRNA binding proteins, it binds directly to 16S rRNA where it nucleates assembly of the head domain of the 30S subunit. Is located at the subunit interface close to the decoding center, probably blocks exit of the E-site tRNA. This chain is Small ribosomal subunit protein uS7, found in Buchnera aphidicola subsp. Baizongia pistaciae (strain Bp).